A 101-amino-acid polypeptide reads, in one-letter code: UPF0235 protein MmarC5_0538 (101 aa).

It belongs to the UPF0235 family.

This is UPF0235 protein MmarC5_0538 from Methanococcus maripaludis (strain C5 / ATCC BAA-1333).